Consider the following 292-residue polypeptide: Homoserine kinase (292 aa).

Residue 81–91 (RPRSGLGSSGA) participates in ATP binding.

Belongs to the GHMP kinase family. Homoserine kinase subfamily.

It localises to the cytoplasm. The catalysed reaction is L-homoserine + ATP = O-phospho-L-homoserine + ADP + H(+). It participates in amino-acid biosynthesis; L-threonine biosynthesis; L-threonine from L-aspartate: step 4/5. Functionally, catalyzes the ATP-dependent phosphorylation of L-homoserine to L-homoserine phosphate. In Thermococcus kodakarensis (strain ATCC BAA-918 / JCM 12380 / KOD1) (Pyrococcus kodakaraensis (strain KOD1)), this protein is Homoserine kinase.